The following is a 232-amino-acid chain: Ornithine carbamoyltransferase (232 aa).

Residues Q15, R39, and 66-69 contribute to the carbamoyl phosphate site; that span reads HPTQ. L-ornithine-binding positions include N99, D163, and 167–168; that span reads SM. Residues 204–207 and T232 contribute to the carbamoyl phosphate site; that span reads HCLP.

The protein belongs to the aspartate/ornithine carbamoyltransferase superfamily. OTCase family.

It localises to the cytoplasm. It catalyses the reaction carbamoyl phosphate + L-ornithine = L-citrulline + phosphate + H(+). It functions in the pathway amino-acid biosynthesis; L-arginine biosynthesis; L-arginine from L-ornithine and carbamoyl phosphate: step 1/3. Functionally, reversibly catalyzes the transfer of the carbamoyl group from carbamoyl phosphate (CP) to the N(epsilon) atom of ornithine (ORN) to produce L-citrulline. The chain is Ornithine carbamoyltransferase (argF) from Neisseria sicca.